A 512-amino-acid chain; its full sequence is Methionine--tRNA ligase (512 aa).

Residues 11–21 (YYASGKPHIGH) carry the 'HIGH' region motif. Positions 126, 129, 143, and 147 each coordinate Zn(2+). Residues 301–305 (KMSKS) carry the 'KMSKS' region motif. Lysine 304 is a binding site for ATP.

It belongs to the class-I aminoacyl-tRNA synthetase family. MetG type 2A subfamily. As to quaternary structure, monomer. Zn(2+) is required as a cofactor.

The protein resides in the cytoplasm. It catalyses the reaction tRNA(Met) + L-methionine + ATP = L-methionyl-tRNA(Met) + AMP + diphosphate. Its function is as follows. Is required not only for elongation of protein synthesis but also for the initiation of all mRNA translation through initiator tRNA(fMet) aminoacylation. This is Methionine--tRNA ligase (metG) from Mycoplasma genitalium (strain ATCC 33530 / DSM 19775 / NCTC 10195 / G37) (Mycoplasmoides genitalium).